The chain runs to 273 residues: Undecaprenyl-diphosphatase (273 aa).

7 helical membrane passes run serine 6 to serine 26, alanine 45 to tryptophan 65, leucine 90 to histidine 110, leucine 116 to alanine 136, tyrosine 190 to leucine 210, alanine 222 to isoleucine 242, and isoleucine 252 to phenylalanine 272.

This sequence belongs to the UppP family.

It localises to the cell inner membrane. The catalysed reaction is di-trans,octa-cis-undecaprenyl diphosphate + H2O = di-trans,octa-cis-undecaprenyl phosphate + phosphate + H(+). Functionally, catalyzes the dephosphorylation of undecaprenyl diphosphate (UPP). Confers resistance to bacitracin. In Salmonella heidelberg (strain SL476), this protein is Undecaprenyl-diphosphatase.